The primary structure comprises 247 residues: Anionic trypsin (247 aa).

The first 15 residues, 1 to 15 (MNPLLILAFLGAAVA), serve as a signal peptide directing secretion. Residues 16-23 (TPTDDDDK) constitute a propeptide, activation peptide. Positions 24–244 (IVGGYTCEEN…FVDWIQSTIA (221 aa)) constitute a Peptidase S1 domain. 6 cysteine pairs are disulfide-bonded: Cys-30/Cys-160, Cys-48/Cys-64, Cys-132/Cys-233, Cys-139/Cys-206, Cys-171/Cys-185, and Cys-196/Cys-220. His-63 acts as the Charge relay system in catalysis. Residues Glu-75, Asn-77, Val-80, and Glu-85 each contribute to the Ca(2+) site. Residue Asp-107 is the Charge relay system of the active site. Ser-200 functions as the Charge relay system in the catalytic mechanism.

This sequence belongs to the peptidase S1 family. The cofactor is Ca(2+).

The protein resides in the secreted. The protein localises to the extracellular space. It catalyses the reaction Preferential cleavage: Arg-|-Xaa, Lys-|-Xaa.. The sequence is that of Anionic trypsin from Canis lupus familiaris (Dog).